The primary structure comprises 328 residues: P2Y purinoceptor 6 (328 aa).

At 1–27 (MERDNGTIQAPGLPPTTCVYREDFKRL) the chain is on the extracellular side. A glycan (N-linked (GlcNAc...) asparagine) is linked at N5. The helical transmembrane segment at 28 to 48 (LLPPVYSVVLVVGLPLNVCVI) threads the bilayer. At 49–62 (AQICASRRTLTRSA) the chain is on the cytoplasmic side. A helical transmembrane segment spans residues 63–83 (VYTLNLALADLLYACSLPLLI). Residues 84–101 (YNYARGDHWPFGDLACRL) are Extracellular-facing. A disulfide bridge links C99 with C177. The helical transmembrane segment at 102–122 (VRFLFYANLHGSILFLTCISF) threads the bilayer. Topologically, residues 123–144 (QRYLGICHPLAPWHKRGGRRAA) are cytoplasmic. Residues 145 to 165 (WVVCGVVWLVVTAQCLPTAVF) form a helical membrane-spanning segment. At 166-194 (AATGIQRNRTVCYDLSPPILSTRYLPYGM) the chain is on the extracellular side. Residue N173 is glycosylated (N-linked (GlcNAc...) asparagine). Residues 195-215 (ALTVIGFLLPFTALLACYCRM) traverse the membrane as a helical segment. Over 216-236 (ARRLCRQDGPAGPVAQERRSK) the chain is Cytoplasmic. Residues 237–257 (AARMAVVVAAVFVISFLPFHI) form a helical membrane-spanning segment. The Extracellular portion of the chain corresponds to 258–280 (TKTAYLAVRSTPGVSCPVLETFA). Residues 281 to 303 (AAYKGTRPFASANSVLDPILFYF) traverse the membrane as a helical segment. Topologically, residues 304-328 (TQQKFRRQPHDLLQKLTAKWQRQRV) are cytoplasmic.

This sequence belongs to the G-protein coupled receptor 1 family. In terms of tissue distribution, abundantly expressed in various tissues including lung, stomach, intestine, spleen, mesentery, heart, and, most prominently, aorta.

The protein localises to the cell membrane. In terms of biological role, receptor for extracellular UTP &gt; ADP = 2-methylthio-ATP &gt; ADP-beta-S &gt; ATP = ATP-gamma-S. The activity of this receptor is mediated by G proteins which activate a phosphatidylinositol-calcium second messenger system. Functionally coupled to phospholipase C. In Rattus norvegicus (Rat), this protein is P2Y purinoceptor 6 (P2ry6).